Here is a 175-residue protein sequence, read N- to C-terminus: Shikimate kinase (175 aa).

12-19 is an ATP binding site; the sequence is GGRASGKS.

It belongs to the shikimate kinase family.

It is found in the cytoplasm. It carries out the reaction shikimate + ATP = 3-phosphoshikimate + ADP + H(+). It participates in metabolic intermediate biosynthesis; chorismate biosynthesis; chorismate from D-erythrose 4-phosphate and phosphoenolpyruvate: step 5/7. The chain is Shikimate kinase from Nitratidesulfovibrio vulgaris (strain ATCC 29579 / DSM 644 / CCUG 34227 / NCIMB 8303 / VKM B-1760 / Hildenborough) (Desulfovibrio vulgaris).